Here is a 221-residue protein sequence, read N- to C-terminus: Endo-1,4-beta-xylanase A (221 aa).

The signal sequence occupies residues 1–16; it reads MKFFATIAALVVGAVA. The region spanning 29–221 is the GH11 domain; the sequence is PMLIERAGPG…GTGSASVTVS (193 aa). Glutamate 114 functions as the Nucleophile in the catalytic mechanism. The active-site Proton donor is glutamate 208.

It belongs to the glycosyl hydrolase 11 (cellulase G) family.

It localises to the secreted. The enzyme catalyses Endohydrolysis of (1-&gt;4)-beta-D-xylosidic linkages in xylans.. The protein operates within glycan degradation; xylan degradation. Functionally, endo-1,4-beta-xylanase involved in the hydrolysis of xylan, a major structural heterogeneous polysaccharide found in plant biomass representing the second most abundant polysaccharide in the biosphere, after cellulose. This chain is Endo-1,4-beta-xylanase A (xynA), found in Aureobasidium pullulans (Black yeast).